The following is a 264-amino-acid chain: Glutamate racemase (264 aa).

Residues 10–11 (DS) and 42–43 (YG) each bind substrate. Cys73 serves as the catalytic Proton donor/acceptor. 74-75 (NT) serves as a coordination point for substrate. Cys183 (proton donor/acceptor) is an active-site residue. 184 to 185 (TH) is a binding site for substrate.

The protein belongs to the aspartate/glutamate racemases family.

It carries out the reaction L-glutamate = D-glutamate. The protein operates within cell wall biogenesis; peptidoglycan biosynthesis. Provides the (R)-glutamate required for cell wall biosynthesis. This is Glutamate racemase from Streptococcus sanguinis (strain SK36).